We begin with the raw amino-acid sequence, 268 residues long: Putative esterase/lipase 1 (268 aa).

His27 is a catalytic residue. Ser94 (charge relay system) is an active-site residue.

Belongs to the lipase/esterase LIP3/BchO family.

In Mycoplasma genitalium (strain ATCC 33530 / DSM 19775 / NCTC 10195 / G37) (Mycoplasmoides genitalium), this protein is Putative esterase/lipase 1.